The sequence spans 747 residues: DNA repair and recombination protein RAD54-like (747 aa).

Residues 1 to 41 are disordered; it reads MRRSLAPSQLAKRKPEGRSCDDEDWQPGLVTPRKRKSSSET. The interval 2 to 9 is required for chromatin remodeling, strand pairing activities and coupling of ATPase activity; it reads RRSLAPSQ. Phosphoserine is present on serine 38. Positions 170–345 constitute a Helicase ATP-binding domain; it reads SRRIPGSHGC…FSLVHFVNSG (176 aa). An ATP-binding site is contributed by 183-190; that stretch reads DEMGLGKT. The short motif at 296-299 is the DEGH box element; that stretch reads DEGH. The 154-residue stretch at 500-653 folds into the Helicase C-terminal domain; it reads VLDYILAVTR…CVVDEEQDVE (154 aa). At lysine 515 the chain carries N6-acetyllysine. Serine 572 is modified (phosphoserine; by NEK1).

The protein belongs to the SNF2/RAD54 helicase family. In terms of assembly, homohexamer. Interacts (via N-terminus) with RAD51. Interacts with NAP1L1. Interacts with BRD9; this interaction orchestrates RAD51-RAD54 complex formation. Post-translationally, acetylated. Acetylation promotes interaction with BRD9, and subsequently with RAD54, which is essential for homologous recombination (HR). Phosphorylated. Phosphorylation at Ser-572 by NEK1 specifically in G2 phase allows efficient removal of RAD51 filaments from DNA.

Its subcellular location is the nucleus. It catalyses the reaction ATP + H2O = ADP + phosphate + H(+). In terms of biological role, plays an essential role in homologous recombination (HR) which is a major pathway for repairing DNA double-strand breaks (DSBs), single-stranded DNA (ssDNA) gaps, and stalled or collapsed replication forks. Acts as a molecular motor during the homology search and guides RAD51 ssDNA along a donor dsDNA thereby changing the homology search from the diffusion-based mechanism to a motor-guided mechanism. Also plays an essential role in RAD51-mediated synaptic complex formation which consists of three strands encased in a protein filament formed once homology is recognized. Once DNA strand exchange occured, dissociates RAD51 from nucleoprotein filaments formed on dsDNA. This Homo sapiens (Human) protein is DNA repair and recombination protein RAD54-like (RAD54L).